A 530-amino-acid polypeptide reads, in one-letter code: Membrane-bound lytic murein transglycosylase F (530 aa).

The first 27 residues, 1–27, serve as a signal peptide directing secretion; that stretch reads MTPFAYKLPIRALWLGLLSLLLVGCQI. The interval 28–279 is non-LT domain; that stretch reads DSEPKSELEK…SLEEKYIGHI (252 aa). Residues 280 to 530 form an LT domain region; sequence GAFDYVDTRA…SAKPSTESKN (251 aa). The active site involves Glu-324. Positions 505–530 are disordered; that stretch reads ALESESLENSESSAEPSAKPSTESKN. The segment covering 513 to 530 has biased composition (low complexity); the sequence is NSESSAEPSAKPSTESKN.

The protein in the N-terminal section; belongs to the bacterial solute-binding protein 3 family. It in the C-terminal section; belongs to the transglycosylase Slt family.

Its subcellular location is the cell outer membrane. The enzyme catalyses Exolytic cleavage of the (1-&gt;4)-beta-glycosidic linkage between N-acetylmuramic acid (MurNAc) and N-acetylglucosamine (GlcNAc) residues in peptidoglycan, from either the reducing or the non-reducing ends of the peptidoglycan chains, with concomitant formation of a 1,6-anhydrobond in the MurNAc residue.. In terms of biological role, murein-degrading enzyme that degrades murein glycan strands and insoluble, high-molecular weight murein sacculi, with the concomitant formation of a 1,6-anhydromuramoyl product. Lytic transglycosylases (LTs) play an integral role in the metabolism of the peptidoglycan (PG) sacculus. Their lytic action creates space within the PG sacculus to allow for its expansion as well as for the insertion of various structures such as secretion systems and flagella. The chain is Membrane-bound lytic murein transglycosylase F from Vibrio cholerae serotype O1 (strain ATCC 39541 / Classical Ogawa 395 / O395).